The following is a 364-amino-acid chain: DNA polymerase IV (364 aa).

Positions 14–198 (IIHIDMDAFF…LPIEKFHGVG (185 aa)) constitute a UmuC domain. Positions 18 and 116 each coordinate Mg(2+). The active site involves glutamate 117.

It belongs to the DNA polymerase type-Y family. In terms of assembly, monomer. Mg(2+) serves as cofactor.

The protein resides in the cytoplasm. It catalyses the reaction DNA(n) + a 2'-deoxyribonucleoside 5'-triphosphate = DNA(n+1) + diphosphate. Poorly processive, error-prone DNA polymerase involved in untargeted mutagenesis. Copies undamaged DNA at stalled replication forks, which arise in vivo from mismatched or misaligned primer ends. These misaligned primers can be extended by PolIV. Exhibits no 3'-5' exonuclease (proofreading) activity. May be involved in translesional synthesis, in conjunction with the beta clamp from PolIII. The sequence is that of DNA polymerase IV from Streptococcus agalactiae serotype Ia (strain ATCC 27591 / A909 / CDC SS700).